Reading from the N-terminus, the 289-residue chain is Pseudouridine-5'-phosphate glycosidase (289 aa).

Glu-10 functions as the Proton donor in the catalytic mechanism. Residues Lys-71 and Val-91 each contribute to the substrate site. Asp-121 contributes to the Mn(2+) binding site. 123 to 125 is a binding site for substrate; sequence SQD. Lys-142 acts as the Nucleophile in catalysis.

This sequence belongs to the pseudouridine-5'-phosphate glycosidase family. In terms of assembly, homotrimer. Requires Mn(2+) as cofactor.

The enzyme catalyses D-ribose 5-phosphate + uracil = psi-UMP + H2O. Catalyzes the reversible cleavage of pseudouridine 5'-phosphate (PsiMP) to ribose 5-phosphate and uracil. Functions biologically in the cleavage direction, as part of a pseudouridine degradation pathway. This chain is Pseudouridine-5'-phosphate glycosidase, found in Kosmotoga olearia (strain ATCC BAA-1733 / DSM 21960 / TBF 19.5.1).